We begin with the raw amino-acid sequence, 206 residues long: Large ribosomal subunit protein uL4 (206 aa).

The interval 44–78 is disordered; that stretch reads RSGNRAQKDREQVKHTTKKPWRQKGTGRARAGMSS. A compositionally biased stretch (basic residues) spans 58–70; that stretch reads HTTKKPWRQKGTG.

The protein belongs to the universal ribosomal protein uL4 family. In terms of assembly, part of the 50S ribosomal subunit.

Functionally, one of the primary rRNA binding proteins, this protein initially binds near the 5'-end of the 23S rRNA. It is important during the early stages of 50S assembly. It makes multiple contacts with different domains of the 23S rRNA in the assembled 50S subunit and ribosome. In terms of biological role, forms part of the polypeptide exit tunnel. The polypeptide is Large ribosomal subunit protein uL4 (Paraburkholderia phytofirmans (strain DSM 17436 / LMG 22146 / PsJN) (Burkholderia phytofirmans)).